Here is a 949-residue protein sequence, read N- to C-terminus: MLGSFAKKIFGSANERRLKSYRPKVAAINALEPEWLKLSNEELAAKTVAFREELAQGKSLDDLLVPAFATVREAARRVLGQRHFDVQLIGGMVLHEGAIAEMRTGEGKTLVATLATYLNALAGKGVHVITVNDYLARRDAEWMGRVYQFLGLTTGIIVHGVDDGERARSYAADITYGTNNEFGFDYLRDNMKYELSQMVQRGHSFAIVDEVDSILIDEARTPLIISGPSDDKSELYNTIDKVMPRLQPEDFEVDEKQRSTNLTERGNEHIEDLLRAAGVEIEGSLYEAANVTIVHHVNQALRAHKLFQRDKDYIVRNGEVVIIDEFTGRMMPGRRYSEGLHQALEAKEHVQVQPENVTLASITFQNYFRLYSKLAGMTGTASTEADEFAEIYKLDVVDIPTNLPVCRLDEDDEVYRSAEEKLRAIVREIEAANAKMQPMLVGTTSIEKSEQLAEAMKSHGYKQIDFAEPRALDKLYAAARAEKPSKLFAVLNARFHEQEAYIVAEAGVPGAITIATNMAGRGTDIKLGGNVDMRVAQECADLEPGEARDAKDAQIRAEVDDFKAKAIAAGGLYIIGTERHESRRIDNQLRGRAGRQGDPGRSKFFLSLKDDLMRIFGSDRMESMLVKLGLKEDEAIVHSWINKALEKAQQKVEARNFDMRKNILKYDNVMNDQRKVVFEQRREMMAKPSLEEMIDDMRQGVVDDLIARHIPRDAYPEAWDSEGLREGVKTSLNIDLPIVEWAKEEGITEDDMRERLQKAADEAYAARVERNGVDVTRYVEKQIVLQALDHLWREHLLTLDHLRQVVGWRGMAQRDPLNEYKSEAFQLFDELIAQLREATTAQLSRVEVAFEPPPGENGFSGGMQEISGPQGGSSGGPIFQEALSAAAFAPPPLAPLEFSDESGSTATLARPAQSASRDEPAGGYAKVGRNQPCPCGSGKKYKHCHGALT.

ATP-binding positions include Gln87, 105-109 (GEGKT), and Asp524. 2 disordered regions span residues 852–876 (PPPG…SSGG) and 896–939 (LEFS…GSGK). Residues Cys933, Cys935, Cys944, and His945 each contribute to the Zn(2+) site.

This sequence belongs to the SecA family. As to quaternary structure, monomer and homodimer. Part of the essential Sec protein translocation apparatus which comprises SecA, SecYEG and auxiliary proteins SecDF-YajC and YidC. The cofactor is Zn(2+).

It localises to the cell inner membrane. The protein resides in the cytoplasm. It catalyses the reaction ATP + H2O + cellular proteinSide 1 = ADP + phosphate + cellular proteinSide 2.. Functionally, part of the Sec protein translocase complex. Interacts with the SecYEG preprotein conducting channel. Has a central role in coupling the hydrolysis of ATP to the transfer of proteins into and across the cell membrane, serving both as a receptor for the preprotein-SecB complex and as an ATP-driven molecular motor driving the stepwise translocation of polypeptide chains across the membrane. The chain is Protein translocase subunit SecA from Methylocella silvestris (strain DSM 15510 / CIP 108128 / LMG 27833 / NCIMB 13906 / BL2).